The primary structure comprises 450 residues: UDP-N-acetylmuramoylalanine--D-glutamate ligase (450 aa).

Residue 115–121 participates in ATP binding; that stretch reads GTNGKTT.

It belongs to the MurCDEF family.

Its subcellular location is the cytoplasm. It carries out the reaction UDP-N-acetyl-alpha-D-muramoyl-L-alanine + D-glutamate + ATP = UDP-N-acetyl-alpha-D-muramoyl-L-alanyl-D-glutamate + ADP + phosphate + H(+). Its pathway is cell wall biogenesis; peptidoglycan biosynthesis. Cell wall formation. Catalyzes the addition of glutamate to the nucleotide precursor UDP-N-acetylmuramoyl-L-alanine (UMA). This chain is UDP-N-acetylmuramoylalanine--D-glutamate ligase, found in Lachnospira eligens (strain ATCC 27750 / DSM 3376 / VPI C15-48 / C15-B4) (Eubacterium eligens).